A 942-amino-acid polypeptide reads, in one-letter code: ATP-dependent RNA helicase DDX42 (942 aa).

Residues 1–18 (MNWNKGGPGTKRGFGFGG) are compositionally biased toward gly residues. Residues 1 to 114 (MNWNKGGPGT…KPIDSDSDDD (114 aa)) form a disordered region. Residue Lys5 is modified to N6-acetyllysine. Omega-N-methylarginine is present on Arg12. The span at 35–52 (SHSAFGATSSSSGFGKSA) shows a compositional bias: low complexity. Phosphoserine is present on Ser58. Residues 70–84 (DEENAYFEDEEEDSS) are compositionally biased toward acidic residues. 4 positions are modified to phosphoserine: Ser96, Ser104, Ser109, and Ser111. A coiled-coil region spans residues 116–157 (LEAFMAEVEDQAARDMKRLEEKDKERKNVKGIRDDIEEEDDQ). Residues 182–203 (EYDSDGNPIAPTKKIIDPLPPI) are disordered. Ser185 carries the phosphoserine modification. The Q motif signature appears at 253-281 (SSFAHFGFDEQLMHQIRKSEYTQPTPIQC). Positions 284–459 (VPVALSGRDM…RDILIDPIRV (176 aa)) constitute a Helicase ATP-binding domain. 297 to 304 (AKTGSGKT) lines the ATP pocket. The DEAD box motif lies at 407 to 410 (DEAD). The 146-residue stretch at 487-632 (WLTRRLVEFT…HVSKELLDLA (146 aa)) folds into the Helicase C-terminal domain. Polar residues-rich tracts occupy residues 737–760 (LNSV…TSAT) and 786–798 (GVNN…NSRE). 2 disordered regions span residues 737-762 (LNSV…ATKG) and 783-942 (GAQG…RWDS). Residues 738–833 (NSVPTNSAQQ…TGNRHSDSPR (96 aa)) form a necessary for interaction with TP53BP2 region. Ser754 is modified (phosphoserine). Over residues 820-924 (SHGETGNRHS…KVDSKTDKTA (105 aa)) the composition is skewed to basic and acidic residues. Lys899 participates in a covalent cross-link: Glycyl lysine isopeptide (Lys-Gly) (interchain with G-Cter in SUMO2).

The protein belongs to the DEAD box helicase family. DDX42 subfamily. As to quaternary structure, transient component of the SF3B subcomplex of the 17S U2 SnRNP complex. Interacts (via the C-terminus) with TP53BP2; the interaction is not inhibitied by TP53BP2 ubiquitination and is independent of p53/TP53.

The protein resides in the cytoplasm. It is found in the nucleus. It catalyses the reaction ATP + H2O = ADP + phosphate + H(+). ATP-dependent RNA helicase that binds to partially double-stranded RNAs (dsRNAs) in order to unwind RNA secondary structures. Unwinding is promoted in the presence of single-strand binding proteins. Also mediates RNA duplex formation thereby displacing the single-strand RNA binding protein. ATP and ADP modulate its activity: ATP binding and hydrolysis by DDX42 triggers RNA strand separation, whereas the ADP-bound form of the protein triggers annealing of complementary RNA strands. Required for assembly of the 17S U2 SnRNP complex of the spliceosome, a large ribonucleoprotein complex that removes introns from transcribed pre-mRNAs: DDX42 associates transiently with the SF3B subcomplex of the 17S U2 SnRNP complex and is released after fulfilling its role in the assembly of 17S U2 SnRNP. Involved in the survival of cells by interacting with TP53BP2 and thereby counteracting the apoptosis-stimulating activity of TP53BP2. Relocalizes TP53BP2 to the cytoplasm. This chain is ATP-dependent RNA helicase DDX42 (DDX42), found in Pongo abelii (Sumatran orangutan).